Here is an 89-residue protein sequence, read N- to C-terminus: Small ribosomal subunit protein uS15 (89 aa).

This sequence belongs to the universal ribosomal protein uS15 family. In terms of assembly, part of the 30S ribosomal subunit. Forms a bridge to the 50S subunit in the 70S ribosome, contacting the 23S rRNA.

One of the primary rRNA binding proteins, it binds directly to 16S rRNA where it helps nucleate assembly of the platform of the 30S subunit by binding and bridging several RNA helices of the 16S rRNA. In terms of biological role, forms an intersubunit bridge (bridge B4) with the 23S rRNA of the 50S subunit in the ribosome. This chain is Small ribosomal subunit protein uS15, found in Acidithiobacillus ferrooxidans (strain ATCC 23270 / DSM 14882 / CIP 104768 / NCIMB 8455) (Ferrobacillus ferrooxidans (strain ATCC 23270)).